A 166-amino-acid chain; its full sequence is Putative universal stress protein SA1532 (166 aa).

Belongs to the universal stress protein A family.

It localises to the cytoplasm. This chain is Putative universal stress protein SA1532, found in Staphylococcus aureus (strain N315).